Here is a 580-residue protein sequence, read N- to C-terminus: Long-chain-fatty-acid--AMP ligase FadD28 (580 aa).

Residues 421–440 (SERTFGGKIVTPSPGTPEGP) form a disordered region.

It belongs to the ATP-dependent AMP-binding enzyme family.

The catalysed reaction is holo-[mycocerosate synthase] + a long-chain fatty acid + ATP = a long-chain fatty acyl-[mycocerosate synthase] + AMP + diphosphate. The enzyme catalyses a long-chain fatty acid + ATP + H(+) = a long-chain fatty acyl-AMP + diphosphate. It carries out the reaction holo-[mycocerosate synthase] + a long-chain fatty acyl-AMP = a long-chain fatty acyl-[mycocerosate synthase] + AMP + H(+). Its pathway is lipid metabolism; fatty acid biosynthesis. Involved in the biosynthesis of phthiocerol dimycocerosate (PDIM), a cell wall-associated lipid found only in pathogenic mycobacteria. Catalyzes the activation of long-chain fatty acids as acyl-adenylates (acyl-AMP), which are then transferred to the multifunctional polyketide synthase Mas for further chain extension. This is Long-chain-fatty-acid--AMP ligase FadD28 (fadD28) from Mycobacterium tuberculosis (strain CDC 1551 / Oshkosh).